A 469-amino-acid polypeptide reads, in one-letter code: Aspartyl/glutamyl-tRNA(Asn/Gln) amidotransferase subunit B (469 aa).

The protein belongs to the GatB/GatE family. GatB subfamily. In terms of assembly, heterotrimer of A, B and C subunits.

It catalyses the reaction L-glutamyl-tRNA(Gln) + L-glutamine + ATP + H2O = L-glutaminyl-tRNA(Gln) + L-glutamate + ADP + phosphate + H(+). The enzyme catalyses L-aspartyl-tRNA(Asn) + L-glutamine + ATP + H2O = L-asparaginyl-tRNA(Asn) + L-glutamate + ADP + phosphate + 2 H(+). In terms of biological role, allows the formation of correctly charged Asn-tRNA(Asn) or Gln-tRNA(Gln) through the transamidation of misacylated Asp-tRNA(Asn) or Glu-tRNA(Gln) in organisms which lack either or both of asparaginyl-tRNA or glutaminyl-tRNA synthetases. The reaction takes place in the presence of glutamine and ATP through an activated phospho-Asp-tRNA(Asn) or phospho-Glu-tRNA(Gln). This is Aspartyl/glutamyl-tRNA(Asn/Gln) amidotransferase subunit B from Methanococcus vannielii (strain ATCC 35089 / DSM 1224 / JCM 13029 / OCM 148 / SB).